The sequence spans 227 residues: MSIKVILTDIEGTTSAVSFVFDVLFPYAAKHLPDFVRQNAQRADVAEQLDAVRRDSNEPQADVERVVEILLAWIAEDRKATPLKALQGMVWEQGYQAGQLKGHVYPDAVEALQRWHQAGYQLFVYSSGSIQAQKLIFGCSEAGDLTPLFSGYFDTTSGPKREPQSYTNIQQAIGVEPQEILFLSDIVQELDAAQSAGLQTCGLAREGGELEGHVTVDSFTGIEPEAF.

Belongs to the HAD-like hydrolase superfamily. MasA/MtnC family. In terms of assembly, monomer. Mg(2+) is required as a cofactor.

It carries out the reaction 5-methylsulfanyl-2,3-dioxopentyl phosphate + H2O = 1,2-dihydroxy-5-(methylsulfanyl)pent-1-en-3-one + phosphate. Its pathway is amino-acid biosynthesis; L-methionine biosynthesis via salvage pathway; L-methionine from S-methyl-5-thio-alpha-D-ribose 1-phosphate: step 3/6. It functions in the pathway amino-acid biosynthesis; L-methionine biosynthesis via salvage pathway; L-methionine from S-methyl-5-thio-alpha-D-ribose 1-phosphate: step 4/6. Functionally, bifunctional enzyme that catalyzes the enolization of 2,3-diketo-5-methylthiopentyl-1-phosphate (DK-MTP-1-P) into the intermediate 2-hydroxy-3-keto-5-methylthiopentenyl-1-phosphate (HK-MTPenyl-1-P), which is then dephosphorylated to form the acireductone 1,2-dihydroxy-3-keto-5-methylthiopentene (DHK-MTPene). The chain is Enolase-phosphatase E1 from Pseudomonas fluorescens (strain Pf0-1).